The following is a 248-amino-acid chain: ATP synthase subunit a, chloroplastic (248 aa).

4 consecutive transmembrane segments (helical) span residues 96–116 (VPFI…GALL), 135–155 (INTT…AGLY), 200–220 (LVVA…MMLL), and 221–241 (GLFT…AYIG).

Belongs to the ATPase A chain family. F-type ATPases have 2 components, CF(1) - the catalytic core - and CF(0) - the membrane proton channel. CF(1) has five subunits: alpha(3), beta(3), gamma(1), delta(1), epsilon(1). CF(0) has four main subunits: a, b, b' and c.

The protein localises to the plastid. The protein resides in the chloroplast thylakoid membrane. Key component of the proton channel; it plays a direct role in the translocation of protons across the membrane. This chain is ATP synthase subunit a, chloroplastic, found in Adiantum capillus-veneris (Maidenhair fern).